The primary structure comprises 955 residues: Villin-5 (955 aa).

Gelsolin-like repeat units lie at residues 29–111, 152–218, 274–339, and 644–712; these read FKPV…DKFL, VHVK…VEDG, LLHE…TVMF, and HFTQ…GSEP. Disordered regions lie at residues 741–783 and 801–895; these read KGGG…RVRV and NSRN…GLPV. A compositionally biased stretch (polar residues) spans 756–776; that stretch reads PTYSGRSTVQDKSQRSRSMSF. Residues 817-836 show a composition bias toward low complexity; it reads PKSATPDSSSAPSKSSATAS. The span at 842–864 shows a compositional bias: basic and acidic residues; that stretch reads DRPKSVKDGSELEKPKQEEDAKE. Polar residues predominate over residues 867–878; sequence NTMTSRVESLTI. The region spanning 890–955 is the HP domain; the sequence is DEGLPVYPYD…NRMKIALQLF (66 aa).

It belongs to the villin/gelsolin family.

It localises to the cytoplasm. The protein localises to the cytoskeleton. Functionally, ca(2+)-regulated actin-binding protein. Binds actin microfilaments (MFs). Involved in actin filament bundling, severing and capping. Caps the barbed end of actin filaments and is able to sever them in a calcium-dependent manner. The polypeptide is Villin-5 (Oryza sativa subsp. japonica (Rice)).